We begin with the raw amino-acid sequence, 179 residues long: Large ribosomal subunit protein uL5 (179 aa).

It belongs to the universal ribosomal protein uL5 family. Part of the 50S ribosomal subunit; part of the 5S rRNA/L5/L18/L25 subcomplex. Contacts the 5S rRNA and the P site tRNA. Forms a bridge to the 30S subunit in the 70S ribosome.

Its function is as follows. This is one of the proteins that bind and probably mediate the attachment of the 5S RNA into the large ribosomal subunit, where it forms part of the central protuberance. In the 70S ribosome it contacts protein S13 of the 30S subunit (bridge B1b), connecting the 2 subunits; this bridge is implicated in subunit movement. Contacts the P site tRNA; the 5S rRNA and some of its associated proteins might help stabilize positioning of ribosome-bound tRNAs. This chain is Large ribosomal subunit protein uL5, found in Yersinia enterocolitica serotype O:8 / biotype 1B (strain NCTC 13174 / 8081).